The primary structure comprises 175 residues: Protein LAZY 3 (175 aa).

The segment at 9-39 is disordered; that stretch reads RKLSGKKRVPTSDSSQEPSSPPLSKEVQGLP. Positions 44–50 match the IGT motif motif; the sequence is TFLAIGT.

This sequence belongs to the LAZY family. Specifically expressed in roots. Expressed in root tips of young seedlings.

In terms of biological role, involved in the regulation of root gravitropism. Functions redundantly with LAZY2 and LAZY4 in the control of root gravitropism. Functions redundantly with LAZY1, LAZY2 and LAZY4 to control plant architecture by coupling gravity sensing to the formation of auxin gradients. This Arabidopsis thaliana (Mouse-ear cress) protein is Protein LAZY 3.